Consider the following 197-residue polypeptide: Adenylate kinase (197 aa).

An ATP-binding site is contributed by 16–21; it reads GAGKGT. Positions 36–65 are NMP; that stretch reads STGDILRDHVARGTALGQRVKPILDAGQLV. Residues threonine 37, arginine 42, 63 to 65, 90 to 93, and glutamine 97 each bind AMP; these read QLV and GFPR. Residues 131–147 are LID; that stretch reads ERGRQAALRGEPVRSDD. Arginine 132 lines the ATP pocket. AMP is bound by residues arginine 144 and arginine 155. Glycine 183 provides a ligand contact to ATP.

This sequence belongs to the adenylate kinase family. Monomer.

The protein localises to the cytoplasm. The enzyme catalyses AMP + ATP = 2 ADP. The protein operates within purine metabolism; AMP biosynthesis via salvage pathway; AMP from ADP: step 1/1. Functionally, catalyzes the reversible transfer of the terminal phosphate group between ATP and AMP. Plays an important role in cellular energy homeostasis and in adenine nucleotide metabolism. In Deinococcus geothermalis (strain DSM 11300 / CIP 105573 / AG-3a), this protein is Adenylate kinase.